The primary structure comprises 1009 residues: Glutamate receptor ionotropic, delta-1 (1009 aa).

A signal peptide spans 1–20; it reads MEALTLWLLPWICQCVSVRA. An interaction with CBLN1 region spans residues 21–436; the sequence is DSIIHIGAIF…ERPMGSRLQG (416 aa). At 21-562 the chain is on the extracellular side; sequence DSIIHIGAIF…SIFSLFAPFD (542 aa). Intrachain disulfides connect Cys-80/Cys-351, Cys-96/Cys-128, and Cys-294/Cys-306. 2 N-linked (GlcNAc...) asparagine glycosylation sites follow: Asn-131 and Asn-200. N-linked (GlcNAc...) asparagine glycans are attached at residues Asn-422 and Asn-498. Glu-527, Val-530, and Asp-531 together coordinate Ca(2+). The helical transmembrane segment at 563-583 threads the bilayer; the sequence is FAVWACIAAAIPVVGVLIFVL. Over 584–637 the chain is Cytoplasmic; it reads NRIQAVRAQSAAQPRPSASATLHSAIWIVYGAFVQQGGESSVNSMAMRIVMGSW. A helical transmembrane segment spans residues 638 to 658; the sequence is WLFTLIVCSSYTANLAAFLTV. Residues 659–830 are Extracellular-facing; the sequence is SRMDNPIRTF…ADGKSLKLHS (172 aa). Ca(2+) contacts are provided by Asp-753, Asp-755, and Ser-757. Residues 831-851 traverse the membrane as a helical segment; that stretch reads FAGVFCILAIGLLLACLVAAL. Residues 852–1009 are Cytoplasmic-facing; the sequence is ELWWNSNRCH…ALDTSHGTSI (158 aa). The span at 930-942 shows a compositional bias: polar residues; the sequence is FLPEQSSHGTSRT. Residues 930–954 are disordered; that stretch reads FLPEQSSHGTSRTLSSGPSSNLPLP. Residues 943-954 are compositionally biased toward low complexity; that stretch reads LSSGPSSNLPLP.

Belongs to the glutamate-gated ion channel (TC 1.A.10.1) family. GRID1 subfamily. Homodimer. Interacts (via extracellular N-terminal domain) with CBLN1 (via C1q domain), and more weakly with CBLN2; the interactions mediate the trans-synaptic adhesion complexes also with neurexins and are required for ligand-gated cation channel activity.

The protein resides in the postsynaptic cell membrane. It catalyses the reaction Ca(2+)(in) = Ca(2+)(out). It carries out the reaction Na(+)(in) = Na(+)(out). Functionally, member of the ionotropic glutamate receptor family, which plays a crucial role in synaptic organization and signal transduction in the central nervous system. Although it shares structural features with ionotropic glutamate receptors, does not bind glutamate as a primary ligand. Instead, forms trans-synaptic adhesion complexes with presynaptic neurexins and cerebellins, regulating NMDA and AMPA receptor activity and influencing synaptic plasticity through signal transduction. In the presence of neurexins and cerebellins, forms cation-selective channels that are proposed to be gated by glycine and D-serine. However, recent research disputes this ligand-gated cation channel activity. Cation-selective ion channel can be triggered by GRM1 in dopaminergic neurons. Also acts as a receptor for GABA, modulating inhibitory synaptic plasticity through non-ionotropic mechanisms. This Homo sapiens (Human) protein is Glutamate receptor ionotropic, delta-1.